The sequence spans 166 residues: Regulatory protein RecX (166 aa).

Belongs to the RecX family.

The protein localises to the cytoplasm. Modulates RecA activity. In Klebsiella pneumoniae subsp. pneumoniae (strain ATCC 700721 / MGH 78578), this protein is Regulatory protein RecX.